The chain runs to 221 residues: Urease accessory protein UreF (221 aa).

It belongs to the UreF family. As to quaternary structure, ureD, UreF and UreG form a complex that acts as a GTP-hydrolysis-dependent molecular chaperone, activating the urease apoprotein by helping to assemble the nickel containing metallocenter of UreC. The UreE protein probably delivers the nickel.

The protein resides in the cytoplasm. In terms of biological role, required for maturation of urease via the functional incorporation of the urease nickel metallocenter. This chain is Urease accessory protein UreF, found in Aliivibrio fischeri (strain ATCC 700601 / ES114) (Vibrio fischeri).